Here is an 889-residue protein sequence, read N- to C-terminus: MDKKEILKEFSADPDKYYNVKLFQEQGFIRKSCAKCGRFFWTLNADRDLCPDDGLDTYSFIGEPPTSKRFDYTQSWKQVEEFFVKNNHTSVSRYPVVCRWRDDLYFTIASVVDFQRVMGSKVVFEFPANPLVVPQTCLRFKDLENVGVTGRHFSSFCMIGQHSVPDLGGYWKDECVDLDYRLLTEQFGINKDEVVFVEDVWAGGGSFGPSLEYFVQGLELGNAVFTEFQGELGKHTTLDQRVIDMGAGLERFAWITMGTPTAYDCCFGPINEKLFGTIGIDSDSEILRKYFTEIAKEIDHYDDLNQVRRLAVKNAGITDEQMQKMITPLEGMYLIADHLRTLIFAITDGALPSNVGGGYNLRMMLRRINATISKLNLKLNIDDLIDLHVDYLKDTYPELDEKRDDVKSILKLESARYEESKVHMKKKADKIKEKGAPSVDELITYYESDGITPEYLKEVDAISEIPSSFYSKLSDLHQSDKKKAIAELPLEGLPETETLFYQDDPMEFSAKVLKVIDDMIVLDRTSFYARGGGQEPDFGSIAGFKVINVDKHADIIVHQLEGGVPKEGETVSCKVDETRRSNITKNHTSTHIINASSRKVLGSWIWQHSAFKDDDHARLDITHHSSLSNDEVQKIEDEANDMIKKNYPVKINYYDRGTAEQKYGFRIYQGGVVPVKSVRIVSIEDKDIEACGGTHVKKTGDIELIKITKTKRIQDGVVRLEFVSGPNAFEYEKQQEQESKRKAEEAVAKEQLEKQREENKSKAREKIPVLLEKVLAGEDVESDGINTKGKLCFTASSDYDDYFHQNFGKKLVGKDSTAAFCGVFEAGPTIRVMVFSGEQSGVNAGEIAKKIASILGGSGGGDAKFAQGGGKDTSKKDEAISKAKSMILG.

Zn(2+)-binding residues include histidine 587, histidine 591, cysteine 691, and histidine 695. 2 disordered regions span residues 734-760 and 866-889; these read QQEQ…EENK and AQGG…MILG. Over residues 872-881 the composition is skewed to basic and acidic residues; the sequence is DTSKKDEAIS.

The protein belongs to the class-II aminoacyl-tRNA synthetase family. The cofactor is Zn(2+).

It is found in the cytoplasm. It catalyses the reaction tRNA(Ala) + L-alanine + ATP = L-alanyl-tRNA(Ala) + AMP + diphosphate. Its function is as follows. Catalyzes the attachment of alanine to tRNA(Ala) in a two-step reaction: alanine is first activated by ATP to form Ala-AMP and then transferred to the acceptor end of tRNA(Ala). Also edits incorrectly charged Ser-tRNA(Ala) and Gly-tRNA(Ala) via its editing domain. This chain is Alanine--tRNA ligase, found in Nitrosopumilus maritimus (strain SCM1).